The following is a 278-amino-acid chain: HTH-type transcriptional activator RhaS (278 aa).

The HTH araC/xylS-type domain occupies 174–272; that stretch reads NQLMAWLEDH…NWSPRDIRQG (99 aa). 2 consecutive DNA-binding regions (H-T-H motif) follow at residues 191–212 and 239–262; these read EAVAEQFSLSLRTLHRQLKQHT and VTEIAYRCGFGDSNHFSTLFRREF.

As to quaternary structure, binds DNA as a dimer.

Its subcellular location is the cytoplasm. In terms of biological role, activates expression of the rhaBAD and rhaT operons. The protein is HTH-type transcriptional activator RhaS of Salmonella arizonae (strain ATCC BAA-731 / CDC346-86 / RSK2980).